The following is a 330-amino-acid chain: 2-phospho-L-lactate transferase (330 aa).

Residue D49 coordinates 7,8-didemethyl-8-hydroxy-5-deazariboflavin.

It belongs to the CofD family. As to quaternary structure, homodimer. The cofactor is Mg(2+).

The enzyme catalyses (2S)-lactyl-2-diphospho-5'-guanosine + 7,8-didemethyl-8-hydroxy-5-deazariboflavin = oxidized coenzyme F420-0 + GMP + H(+). It functions in the pathway cofactor biosynthesis; coenzyme F420 biosynthesis. In terms of biological role, catalyzes the transfer of the 2-phospholactate moiety from (2S)-lactyl-2-diphospho-5'-guanosine to 7,8-didemethyl-8-hydroxy-5-deazariboflavin (FO) with the formation of oxidized coenzyme F420-0 and GMP. In Haloarcula marismortui (strain ATCC 43049 / DSM 3752 / JCM 8966 / VKM B-1809) (Halobacterium marismortui), this protein is 2-phospho-L-lactate transferase.